The sequence spans 1261 residues: SNF2 domain-containing protein CLASSY 2 (1261 aa).

The segment at 458–479 (FQKRTSRSSRSVAPKTEDSDEP) is disordered. The Helicase ATP-binding domain maps to 704 to 904 (DPTSGNIGGC…FNTLCLARPK (201 aa)). Position 717 to 724 (717 to 724 (HSPGAGKT)) interacts with ATP. Residues 855-858 (DEGH) carry the DEAH box motif. The Helicase C-terminal domain occupies 1067 to 1232 (FVLNLIFRVV…DPSLWQAEKI (166 aa)).

Belongs to the helicase family. As to quaternary structure, interacts with NRPD1 and SHH1.

The protein localises to the nucleus. In terms of biological role, probable chromatin remodeling factor. This chain is SNF2 domain-containing protein CLASSY 2 (CLSY2), found in Arabidopsis thaliana (Mouse-ear cress).